The primary structure comprises 805 residues: Pentatricopeptide repeat-containing protein At4g01570 (805 aa).

16 PPR repeats span residues 91 to 125 (SATA…GVNL), 126 to 160 (DQTM…GDCL), 161 to 196 (NPSV…DNHS), 211 to 241 (GTVA…LKGM), 247 to 277 (DTWS…MKER), 288 to 322 (DICT…GHEP), 323 to 357 (DNST…GFVP), 358 to 392 (DTIV…GVRA), 393 to 427 (SCWT…GQFV), 428 to 462 (DAIT…GFSV), 463 to 497 (DLVT…NLVP), 593 to 627 (DVDM…GVTD), 629 to 663 (TSYT…FCAA), 664 to 698 (DIAT…GGYL), 699 to 733 (DIVM…GINP), and 734 to 768 (DVVS…GCLP).

Belongs to the PPR family. P subfamily.

The polypeptide is Pentatricopeptide repeat-containing protein At4g01570 (Arabidopsis thaliana (Mouse-ear cress)).